Here is a 206-residue protein sequence, read N- to C-terminus: Orotate phosphoribosyltransferase (206 aa).

5-phospho-alpha-D-ribose 1-diphosphate contacts are provided by residues arginine 97, lysine 98, lysine 101, and 125–133 (NDVIASGRS). An orotate-binding site is contributed by arginine 157.

This sequence belongs to the purine/pyrimidine phosphoribosyltransferase family. PyrE subfamily. As to quaternary structure, homodimer. Mg(2+) serves as cofactor.

It catalyses the reaction orotidine 5'-phosphate + diphosphate = orotate + 5-phospho-alpha-D-ribose 1-diphosphate. Its pathway is pyrimidine metabolism; UMP biosynthesis via de novo pathway; UMP from orotate: step 1/2. Functionally, catalyzes the transfer of a ribosyl phosphate group from 5-phosphoribose 1-diphosphate to orotate, leading to the formation of orotidine monophosphate (OMP). In Chlamydia felis (strain Fe/C-56) (Chlamydophila felis), this protein is Orotate phosphoribosyltransferase.